A 388-amino-acid chain; its full sequence is Succinate--CoA ligase [ADP-forming] subunit beta (388 aa).

The ATP-grasp domain occupies 9–244 (KQLFARYGLP…PSQEDSREAH (236 aa)). ATP is bound by residues Lys-46, 53-55 (GRG), Glu-99, Thr-102, and Glu-107. The Mg(2+) site is built by Asn-199 and Asp-213. Residues Asn-264 and 321–323 (GIV) each bind substrate.

The protein belongs to the succinate/malate CoA ligase beta subunit family. As to quaternary structure, heterotetramer of two alpha and two beta subunits. Mg(2+) serves as cofactor.

The enzyme catalyses succinate + ATP + CoA = succinyl-CoA + ADP + phosphate. It carries out the reaction GTP + succinate + CoA = succinyl-CoA + GDP + phosphate. It functions in the pathway carbohydrate metabolism; tricarboxylic acid cycle; succinate from succinyl-CoA (ligase route): step 1/1. Succinyl-CoA synthetase functions in the citric acid cycle (TCA), coupling the hydrolysis of succinyl-CoA to the synthesis of either ATP or GTP and thus represents the only step of substrate-level phosphorylation in the TCA. The beta subunit provides nucleotide specificity of the enzyme and binds the substrate succinate, while the binding sites for coenzyme A and phosphate are found in the alpha subunit. The chain is Succinate--CoA ligase [ADP-forming] subunit beta from Pectobacterium carotovorum subsp. carotovorum (strain PC1).